The following is a 117-amino-acid chain: Large ribosomal subunit protein bL19 (117 aa).

This sequence belongs to the bacterial ribosomal protein bL19 family.

Its function is as follows. This protein is located at the 30S-50S ribosomal subunit interface and may play a role in the structure and function of the aminoacyl-tRNA binding site. This is Large ribosomal subunit protein bL19 from Methylibium petroleiphilum (strain ATCC BAA-1232 / LMG 22953 / PM1).